The sequence spans 291 residues: Acetylglutamate kinase (291 aa).

Substrate-binding positions include 64–65 (GG), Arg-86, and Asn-190.

This sequence belongs to the acetylglutamate kinase family. ArgB subfamily.

The protein localises to the cytoplasm. The enzyme catalyses N-acetyl-L-glutamate + ATP = N-acetyl-L-glutamyl 5-phosphate + ADP. It participates in amino-acid biosynthesis; L-arginine biosynthesis; N(2)-acetyl-L-ornithine from L-glutamate: step 2/4. In terms of biological role, catalyzes the ATP-dependent phosphorylation of N-acetyl-L-glutamate. This is Acetylglutamate kinase from Leptospira borgpetersenii serovar Hardjo-bovis (strain JB197).